Consider the following 235-residue polypeptide: Serine protease SplA (235 aa).

A signal peptide spans 1-35 (MNKNVMIKGLTALTILTSLGFAENISDQPHSIAKA). Active-site charge relay system residues include H74, D113, and S189.

The protein belongs to the peptidase S1B family.

Its subcellular location is the secreted. In Staphylococcus aureus, this protein is Serine protease SplA (splA).